A 205-amino-acid chain; its full sequence is Recombination protein RecR (205 aa).

The segment at 60 to 75 adopts a C4-type zinc-finger fold; it reads CKVCHNISDTETCQIC. One can recognise a Toprim domain in the interval 83-178; that stretch reads STVCVVENIR…KLSVIARGIS (96 aa).

It belongs to the RecR family.

Functionally, may play a role in DNA repair. It seems to be involved in an RecBC-independent recombinational process of DNA repair. It may act with RecF and RecO. In Bacteroides thetaiotaomicron (strain ATCC 29148 / DSM 2079 / JCM 5827 / CCUG 10774 / NCTC 10582 / VPI-5482 / E50), this protein is Recombination protein RecR.